Here is a 968-residue protein sequence, read N- to C-terminus: Probable transport protein MmpL2 (968 aa).

Transmembrane regions (helical) follow at residues 22-42, 204-224, 245-265, 297-317, 328-348, 378-398, 763-783, 787-807, 815-835, 866-886, and 890-910; these read FAVV…LAVP, VIAA…LVLI, IFSL…AAST, AHVI…LSFA, PIAI…PAVL, WPGP…LALP, YDLL…MMII, VVAA…SFGL, ILGI…LLAV, TGGV…LFVF, and RIIG…TLVV.

It belongs to the resistance-nodulation-cell division (RND) (TC 2.A.6) family. MmpL subfamily.

Its subcellular location is the cell membrane. The protein is Probable transport protein MmpL2 (mmpL2) of Mycobacterium tuberculosis (strain CDC 1551 / Oshkosh).